Consider the following 287-residue polypeptide: MRIILITGISGSGKSVGLKALEDAGYFCVDNLPPTLLRALVTERLEEHGTTLAVSMDVRSASSLIGLPADLAWLRSQGHDVKVLFLTAKTDSLIARFSETRRSHPLSHRGFASDSTAERRTLTECIHEEREMLAGIEEIGHVIDTSGMRANKLRAWIKGLVESDHSPLTILFESFAFKFGVPLDADLVFDVRTLPNPHYDEALRPLTGRDAPVQDFLQTQPDATALLADIRGFVEKWLPAFKNDNRGYLTVAIGCTGGQHRSVYIVEQLAQYFRPTEHVLVRHRELD.

An ATP-binding site is contributed by glycine 8–serine 15. Residue aspartate 57–serine 60 coordinates GTP.

Belongs to the RapZ-like family.

Displays ATPase and GTPase activities. The chain is Nucleotide-binding protein HEAR2885 from Herminiimonas arsenicoxydans.